Consider the following 412-residue polypeptide: Divalent metal cation transporter MntH (412 aa).

The next 11 helical transmembrane spans lie at 19–39 (LALM…GNFA), 46–66 (ASFG…AMLI), 94–114 (VWFY…AEFI), 122–142 (LILG…TFLI), 156–176 (VIGG…IFSQ), 196–216 (AVFL…IYLH), 241–261 (IAMT…AAAF), 290–310 (VFGL…TLAG), 329–349 (TITM…TRIL), 350–370 (VMSQ…LLIF), and 389–409 (IGWM…VGTA).

The protein belongs to the NRAMP family.

The protein localises to the cell inner membrane. Functionally, h(+)-stimulated, divalent metal cation uptake system. The sequence is that of Divalent metal cation transporter MntH from Citrobacter koseri (strain ATCC BAA-895 / CDC 4225-83 / SGSC4696).